Reading from the N-terminus, the 187-residue chain is UPF0340 protein str1894 (187 aa).

This sequence belongs to the UPF0340 family.

The polypeptide is UPF0340 protein str1894 (Streptococcus thermophilus (strain CNRZ 1066)).